The chain runs to 156 residues: Oxidized purine nucleoside triphosphate hydrolase (156 aa).

Residues 3-132 (TSKLLTLVLV…WFPLMLQKKR (130 aa)) enclose the Nudix hydrolase domain. Thr-8 contributes to the 2-oxo-dATP binding site. O(6)-methyl-dGMP contacts are provided by residues Thr-8, Lys-23, Asn-33, and 35 to 38 (FGGK). An 8-oxo-dGTP-binding site is contributed by Lys-23. Residues Asn-33 and 35 to 38 (FGGK) contribute to the 2-oxo-dATP site. Mg(2+) is bound by residues Gly-36, Glu-52, Glu-55, Glu-56, and Glu-100. The short motif at 37-58 (GKVQTGETIEQAARRELLEESG) is the Nudix box element. 117–120 (WADD) is a binding site for 2-oxo-dATP. 117–120 (WADD) serves as a coordination point for O(6)-methyl-dGMP.

It belongs to the Nudix hydrolase family. As to quaternary structure, monomer. Mg(2+) is required as a cofactor.

The protein resides in the cytoplasm. The protein localises to the cytosol. It localises to the mitochondrion matrix. It is found in the nucleus. The enzyme catalyses 2-oxo-dATP + H2O = 2-oxo-dAMP + diphosphate + H(+). The catalysed reaction is 2-oxo-ATP + H2O = 2-oxo-AMP + diphosphate + H(+). It catalyses the reaction 8-oxo-dGTP + H2O = 8-oxo-dGMP + diphosphate + H(+). It carries out the reaction 8-oxo-dATP + H2O = 8-oxo-dAMP + diphosphate + H(+). The enzyme catalyses O(6)-methyl-dGTP + H2O = O(6)-methyl-dGMP + diphosphate + H(+). The catalysed reaction is N(6)-methyl-dATP + H2O = N(6)-methyl-dAMP + diphosphate + H(+). It catalyses the reaction N(6)-methyl-ATP + H2O = N(6)-methyl-AMP + diphosphate + H(+). Its activity is regulated as follows. Inhibited by TH588. Oxidized purine nucleoside triphosphate hydrolase which is a prominent sanitizer of the oxidized nucleotide pool. Catalyzes the hydrolysis of 2-oxo-dATP (2-hydroxy-dATP) into 2-oxo-dAMP. Also has a significant hydrolase activity toward 2-oxo-ATP, 8-oxo-dGTP and 8-oxo-dATP. Through the hydrolysis of oxidized purine nucleoside triphosphates, prevents their incorporation into DNA and the subsequent transversions A:T to C:G and G:C to T:A. Also catalyzes the hydrolysis of methylated purine nucleoside triphosphate preventing their integration into DNA. Through this antimutagenic activity protects cells from oxidative stress. The protein is Oxidized purine nucleoside triphosphate hydrolase (nudt1) of Danio rerio (Zebrafish).